The sequence spans 292 residues: Polyamine aminopropyltransferase 1 (292 aa).

The region spanning 1-244 is the PABS domain; sequence MELGMFRLNI…YVNSFVFASD (244 aa). Residue glutamine 35 participates in S-methyl-5'-thioadenosine binding. Spermidine-binding residues include histidine 66 and glutamate 90. Residues aspartate 110 and 142–143 each bind S-methyl-5'-thioadenosine; that span reads DG. Aspartate 163 functions as the Proton acceptor in the catalytic mechanism.

It belongs to the spermidine/spermine synthase family. Homodimer or homotetramer.

It localises to the cytoplasm. It carries out the reaction norspermine + S-adenosyl 3-(methylsulfanyl)propylamine = caldopentamine + S-methyl-5'-thioadenosine + 2 H(+). The enzyme catalyses norspermidine + S-adenosyl 3-(methylsulfanyl)propylamine = norspermine + S-methyl-5'-thioadenosine + H(+). It catalyses the reaction S-adenosyl 3-(methylsulfanyl)propylamine + spermidine = thermospermine + S-methyl-5'-thioadenosine + H(+). Its function is as follows. Involved in the biosynthesis of polyamines which are thought to support the growth of thermophilic microorganisms under high-temperature conditions. It seems that long-chain and branched-chain of polyamines effectively stabilize DNA and RNA, respectively. Catalyzes the irreversible transfer of a propylamine group from the amino donor S-adenosylmethioninamine (decarboxy-AdoMet) to norspermidine, spermidine and norspermine to yield norspermine, thermospermine and caldopentamine, respectively. It can also synthesize sym-norspermidine (bis(3-aminopropyl)amine) from 1,3-diaminopropane with a very low activity. The biosynthesis of caldohexamine and caldoheptamine from caldopentamine has been also observed. The protein is Polyamine aminopropyltransferase 1 of Hyperthermus butylicus (strain DSM 5456 / JCM 9403 / PLM1-5).